Here is a 391-residue protein sequence, read N- to C-terminus: DNA-directed RNA polymerase I subunit RPA43 (391 aa).

Disordered stretches follow at residues 1-27 and 220-391; these read MANW…SGGS and QKQV…KKSK. Residues 288-299 show a composition bias toward basic residues; it reads GRHKEKKKKKKR. Positions 289 to 353 form a coiled coil; sequence RHKEKKKKKK…RDKQQDSAEI (65 aa). The span at 312-323 shows a compositional bias: polar residues; the sequence is MNNNSLQETALD. Over residues 336–345 the composition is skewed to basic residues; that stretch reads KEKKKKKKRD.

Belongs to the eukaryotic RPA43 RNA polymerase subunit family. As to quaternary structure, component of the RNA polymerase I (Pol I) complex consisting of at least 13 subunits.

The protein localises to the nucleus. It localises to the nucleolus. Functionally, DNA-dependent RNA polymerase catalyzes the transcription of DNA into RNA using the four ribonucleoside triphosphates as substrates. Component of RNA polymerase I which synthesizes ribosomal RNA precursors. May be involved in recruitment of Pol I to rDNA promoters. This Danio rerio (Zebrafish) protein is DNA-directed RNA polymerase I subunit RPA43.